The chain runs to 1492 residues: Copper-transporting ATPase 1 (1492 aa).

Topologically, residues 1 to 645 (MEPNMDANSI…KREIKQWRGS (645 aa)) are cytoplasmic. HMA domains are found at residues 8–74 (NSIT…FDAL) and 85–151 (TNTV…LDMG). 3 residues coordinate Cu(+): Thr-18, Cys-19, and Cys-22. Thr-152 carries the phosphothreonine modification. In terms of domain architecture, HMA 3 spans 171 to 237 (VLLKMRVEGM…QIEAVGFPAF (67 aa)). Cu(+) is bound by residues Cys-182 and Cys-185. The residue at position 270 (Ser-270) is a Phosphoserine. An HMA 4 domain is found at 277–343 (SAITFTIDGM…AIEAVSPGQY (67 aa)). Residues Cys-288 and Cys-291 each contribute to the Cu(+) site. Thr-327 is subject to Phosphothreonine. 4 positions are modified to phosphoserine: Ser-339, Ser-353, Ser-357, and Ser-362. 3 HMA domains span residues 377–443 (QEVV…FDAV), 480–546 (NKCY…FGAV), and 556–622 (GILE…FEAS). 6 residues coordinate Cu(+): Cys-388, Cys-391, Cys-491, Cys-494, Cys-567, and Cys-570. A helical membrane pass occupies residues 646–667 (FLVSLFFCIPVMGLMIYMMVMD). Topologically, residues 668-706 (HHLATLNHNQNMSNEEMINMHSSMFLERQILPGLSIMNL) are extracellular. Asn-678 carries an N-linked (GlcNAc...) asparagine glycan. A helical membrane pass occupies residues 707 to 726 (LSLLLCLPVQFCGGWYFYIQ). At 727-733 (AYKALRH) the chain is on the cytoplasmic side. A helical membrane pass occupies residues 734–754 (KTANMDVLIVLATTIAFAYSL). Over 755-773 (VILLVAMYERAKVNPITFF) the chain is Extracellular. Residues 774–794 (DTPPMLFVFIALGRWLEHIAK) traverse the membrane as a helical segment. Residues 795–927 (GKTSEALAKL…SKAPIQQFAD (133 aa)) are Cytoplasmic-facing. A helical transmembrane segment spans residues 928–951 (KLSGYFVPFIVLVSIVTLLVWIII). The Extracellular portion of the chain corresponds to 952–981 (GFQNFEIVEAYFPGYNRSISRTETIIRFAF). Residues 982–1003 (QASITVLCIACPCSLGLATPTA) traverse the membrane as a helical segment. The Cytoplasmic portion of the chain corresponds to 1004–1348 (VMVGTGVGAQ…LSRKTVKRIR (345 aa)). Catalysis depends on Asp-1036, which acts as the 4-aspartylphosphate intermediate. An ATP-binding site is contributed by Glu-1073. Thr-1204 is modified (phosphothreonine). Mg(2+)-binding residues include Asp-1293 and Asp-1297. Residues 1349–1366 (INFVFALIYNLIGIPIAA) traverse the membrane as a helical segment. The Extracellular segment spans residues 1367–1377 (GVFLPIGLVLQ). Residues 1378 to 1397 (PWMGSAAMAASSVSVVLSSL) traverse the membrane as a helical segment. Over 1398 to 1492 (FLKLYRKPTY…DFREDDDTTL (95 aa)) the chain is Cytoplasmic. Phosphoserine is present on residues Ser-1422, Ser-1424, Ser-1452, Ser-1455, and Ser-1458. Positions 1459-1460 (LL) match the Endocytosis signal motif. Residues Ser-1461, Ser-1465, Ser-1468, and Ser-1478 each carry the phosphoserine modification. Residues 1478 to 1492 (SLLVGDFREDDDTTL) are PDZD11-binding. Positions 1479-1480 (LL) match the Endocytosis signal motif.

Belongs to the cation transport ATPase (P-type) (TC 3.A.3) family. Type IB subfamily. As to quaternary structure, monomer. Interacts with PDZD11. Interacts with ATOX1 and COMMD1. Interacts with TYRP1. Directly interacts with SOD3; this interaction is copper-dependent and is required for SOD3 activity. As to expression, expressed in hippocampal neuron (at protein level). Expressed in anterior pituitary gland (at protein level).

The protein localises to the golgi apparatus. It is found in the trans-Golgi network membrane. It localises to the cell membrane. Its subcellular location is the melanosome membrane. The protein resides in the early endosome membrane. The protein localises to the cell projection. It is found in the axon. It localises to the dendrite. Its subcellular location is the postsynaptic density. It catalyses the reaction Cu(+)(in) + ATP + H2O = Cu(+)(out) + ADP + phosphate + H(+). Functionally, ATP-driven copper (Cu(+)) ion pump that plays an important role in intracellular copper ion homeostasis. Within a catalytic cycle, acquires Cu(+) ion from donor protein on the cytoplasmic side of the membrane and delivers it to acceptor protein on the lumenal side. The transfer of Cu(+) ion across the membrane is coupled to ATP hydrolysis and is associated with a transient phosphorylation that shifts the pump conformation from inward-facing to outward-facing state. Under physiological conditions, at low cytosolic copper concentration, it is localized at the trans-Golgi network (TGN) where it transfers Cu(+) ions to cuproenzymes of the secretory pathway. Upon elevated cytosolic copper concentrations, it relocalizes to the plasma membrane where it is responsible for the export of excess Cu(+) ions. May play a dual role in neuron function and survival by regulating cooper efflux and neuronal transmission at the synapse as well as by supplying Cu(+) ions to enzymes such as PAM, TYR and SOD3. In the melanosomes of pigmented cells, provides copper cofactor to TYR to form an active TYR holoenzyme for melanin biosynthesis. The sequence is that of Copper-transporting ATPase 1 from Rattus norvegicus (Rat).